We begin with the raw amino-acid sequence, 2238 residues long: COPII coat assembly protein SEC16 (2238 aa).

Residues 1–20 (MTPEAKRKKNQKKKLRQKQK) show a composition bias toward basic residues. Disordered regions lie at residues 1-115 (MTPE…DNYH), 135-161 (GGSI…SDPD), 173-255 (GQPL…DYPK), 297-363 (EEVD…DTHK), 394-596 (DDEQ…TSAD), 642-666 (MSTS…SINT), 757-787 (FTNQ…PAQI), 824-878 (GNSA…SPST), 892-988 (LVHS…TVLP), 1547-1577 (PPTN…NRPN), 1600-1703 (GKKS…PPIQ), 1732-1766 (TASP…MDPK), 1809-1901 (NEEE…PKGK), 1928-2102 (RPQE…GWLK), and 2133-2238 (KNAS…MENL). The segment covering 45–87 (LTSNSNVSTPDYTSNFEISVTSTQEVNVDSQLSQNQNSDNFIN) has biased composition (polar residues). Residues 100-115 (FDSHEDIESEMKDNYH) show a composition bias toward basic and acidic residues. 2 stretches are compositionally biased toward polar residues: residues 135–144 (GGSIDSSNTV) and 217–236 (LASN…NLLT). Composition is skewed to basic and acidic residues over residues 238-255 (NRLE…DYPK) and 297-322 (EEVD…HSEE). Residues 325–335 (TSSVSTQTGMA) are compositionally biased toward polar residues. Residues 351 to 363 (KMEERNINSDTHK) show a composition bias toward basic and acidic residues. Residues 394 to 404 (DDEQSVNDLQD) are compositionally biased toward acidic residues. Positions 405 to 448 (ESSLLQEETTFSQIPKNEVNTENQENIGSESVSKINVANENSME) are enriched in polar residues. Composition is skewed to basic and acidic residues over residues 480–513 (EVSH…KKED) and 535–553 (MKSE…KEES). Polar residues-rich tracts occupy residues 556-596 (NVRT…TSAD), 657-666 (RPSSHSSINT), and 757-784 (FTNQ…SVNP). Residues 824–842 (GNSAVSTTSGKSVGTSVAT) are compositionally biased toward low complexity. Composition is skewed to polar residues over residues 843 to 878 (KQNP…SPST), 893 to 936 (VHSS…SQND), 946 to 957 (STGQYAGYSSHS), 1548 to 1565 (PTNT…QRAV), 1610 to 1638 (NRAS…STPN), 1732 to 1747 (TASP…SNYS), 1824 to 1849 (VDQS…TVSI), and 1936 to 1948 (TSSI…QISN). The span at 1963–1972 (VELKQDEVSK) shows a compositional bias: basic and acidic residues. A compositionally biased stretch (acidic residues) spans 2034–2053 (QYDDVVEEDSDDSDDSEDDS).

This sequence belongs to the SEC16 family.

The protein resides in the endoplasmic reticulum membrane. In terms of biological role, involved in the initiation of assembly of the COPII coat required for the formation of transport vesicles from the endoplasmic reticulum (ER) and the selection of cargo molecules. Also involved in autophagy. This chain is COPII coat assembly protein SEC16 (SEC16), found in Candida glabrata (strain ATCC 2001 / BCRC 20586 / JCM 3761 / NBRC 0622 / NRRL Y-65 / CBS 138) (Yeast).